The primary structure comprises 171 residues: T-cell surface glycoprotein CD3 delta chain (171 aa).

The first 21 residues, 1-21, serve as a signal peptide directing secretion; the sequence is MEHSRFLSGLILAAFLSRVSP. Residues 22–104 lie on the Extracellular side of the membrane; that stretch reads YEVEMEELED…NCVELDSATL (83 aa). Cysteine 37 and cysteine 72 are joined by a disulfide. N-linked (GlcNAc...) asparagine glycosylation occurs at asparagine 38. A helical membrane pass occupies residues 105–125; that stretch reads AGIIVTDIIATLLLALGVYCF. Residues 126 to 171 are Cytoplasmic-facing; sequence AGHEMGRFSRAADTQDLLRNDQLYQPLRDRNDGQYSRLGENWARNK. Residues 138 to 166 form the ITAM domain; sequence DTQDLLRNDQLYQPLRDRNDGQYSRLGEN. Tyrosine 149 and tyrosine 160 each carry phosphotyrosine.

In terms of assembly, the TCR-CD3 complex is composed of a CD3D/CD3E and a CD3G/CD3E heterodimers that preferentially associate with TCRalpha and TCRbeta, respectively, to form TCRalpha/CD3E/CD3G and TCRbeta/CD3G/CD3E trimers. In turn, the hexamer interacts with CD3Z homodimer to form the TCR-CD3 complex. Alternatively, TCRalpha and TCRbeta can be replaced by TCRgamma and TCRdelta. Interacts with coreceptors CD4 and CD8. In terms of processing, phosphorylated on Tyr residues after T-cell receptor triggering by LCK in association with CD4/CD8. As to expression, CD3D is mostly present on T-lymphocytes with its TCR-CD3 partners. Present also in fetal NK-cells.

The protein localises to the cell membrane. Functionally, part of the TCR-CD3 complex present on T-lymphocyte cell surface that plays an essential role in adaptive immune response. When antigen presenting cells (APCs) activate T-cell receptor (TCR), TCR-mediated signals are transmitted across the cell membrane by the CD3 chains CD3D, CD3E, CD3G and CD3Z. All CD3 chains contain immunoreceptor tyrosine-based activation motifs (ITAMs) in their cytoplasmic domain. Upon TCR engagement, these motifs become phosphorylated by Src family protein tyrosine kinases LCK and FYN, resulting in the activation of downstream signaling pathways. In addition of this role of signal transduction in T-cell activation, CD3D plays an essential role in thymocyte differentiation. Indeed, participates in correct intracellular TCR-CD3 complex assembly and surface expression. In absence of a functional TCR-CD3 complex, thymocytes are unable to differentiate properly. Interacts with CD4 and CD8 and thus serves to establish a functional link between the TCR and coreceptors CD4 and CD8, which is needed for activation and positive selection of CD4 or CD8 T-cells. The polypeptide is T-cell surface glycoprotein CD3 delta chain (CD3D) (Sus scrofa (Pig)).